The sequence spans 197 residues: Ribosomal RNA large subunit methyltransferase E (197 aa).

Gly52, Trp54, Asp72, Asp88, and Asp112 together coordinate S-adenosyl-L-methionine. Lys152 serves as the catalytic Proton acceptor.

Belongs to the class I-like SAM-binding methyltransferase superfamily. RNA methyltransferase RlmE family.

Its subcellular location is the cytoplasm. It catalyses the reaction uridine(2552) in 23S rRNA + S-adenosyl-L-methionine = 2'-O-methyluridine(2552) in 23S rRNA + S-adenosyl-L-homocysteine + H(+). Functionally, specifically methylates the uridine in position 2552 of 23S rRNA at the 2'-O position of the ribose in the fully assembled 50S ribosomal subunit. The chain is Ribosomal RNA large subunit methyltransferase E from Nitrosopumilus maritimus (strain SCM1).